A 466-amino-acid chain; its full sequence is Soluble pyridine nucleotide transhydrogenase (466 aa).

An FAD-binding site is contributed by 36-45; the sequence is ERYQNVGGGC.

This sequence belongs to the class-I pyridine nucleotide-disulfide oxidoreductase family. In terms of assembly, homooligomer; probable homooctamer. The cofactor is FAD.

Its subcellular location is the cytoplasm. The enzyme catalyses NAD(+) + NADPH = NADH + NADP(+). In terms of biological role, conversion of NADPH, generated by peripheral catabolic pathways, to NADH, which can enter the respiratory chain for energy generation. This Shigella flexneri protein is Soluble pyridine nucleotide transhydrogenase.